The chain runs to 236 residues: MIRRYWNINFEEMMKAGVHFGHGTRKWNPRMAPYISAKRKGIHITNLTRTARFLSEACDLVFDAASRRKQFLIVGTKNKAADSVARAAIRARCHYVNKKWLGGILTNWSTTETRLQKFRDLRMEQKAGRLNRLPKGDAARLKRQLAHLQTYLGGIKYMTGLPDIVIIVDQQEEYTALRECMTLGIPTICLIDTNCDPDLADISIPTNDDAIASIRLILNKLVFAICEGRSSYIRNP.

It belongs to the universal ribosomal protein uS2 family.

The protein localises to the plastid. The protein resides in the chloroplast. This is Small ribosomal subunit protein uS2c (rps2) from Manihot esculenta (Cassava).